A 484-amino-acid chain; its full sequence is Chromosomal replication initiator protein DnaA (484 aa).

A domain I, interacts with DnaA modulators region spans residues 1–73 (MQEGKNIWSL…EILIEKGHST (73 aa)). The tract at residues 73–140 (TINVEFIHSQ…EEIHIKYRNP (68 aa)) is domain II. The tract at residues 141 to 357 (FLKKKYTFEN…AAVTKLKAHI (217 aa)) is domain III, AAA+ region. ATP-binding residues include Gly-185, Gly-187, Lys-188, and Thr-189. The segment at 358–484 (DLEDIEIDTN…IELMNKINKN (127 aa)) is domain IV, binds dsDNA.

Belongs to the DnaA family. In terms of assembly, oligomerizes as a right-handed, spiral filament on DNA at oriC.

The protein localises to the cytoplasm. In terms of biological role, plays an essential role in the initiation and regulation of chromosomal replication. ATP-DnaA binds to the origin of replication (oriC) to initiate formation of the DNA replication initiation complex once per cell cycle. Binds the DnaA box (a 9 base pair repeat at the origin) and separates the double-stranded (ds)DNA. Forms a right-handed helical filament on oriC DNA; dsDNA binds to the exterior of the filament while single-stranded (ss)DNA is stabiized in the filament's interior. The ATP-DnaA-oriC complex binds and stabilizes one strand of the AT-rich DNA unwinding element (DUE), permitting loading of DNA polymerase. After initiation quickly degrades to an ADP-DnaA complex that is not apt for DNA replication. Binds acidic phospholipids. The sequence is that of Chromosomal replication initiator protein DnaA from Borrelia recurrentis (strain A1).